The following is a 161-amino-acid chain: Allophycocyanin alpha-B chain (161 aa).

The residue at position 71 (N71) is an N4-methylasparagine. A (2R,3E)-phycocyanobilin-binding site is contributed by C81.

Belongs to the phycobiliprotein family. Contains one covalently linked bilin chromophore.

It localises to the plastid. It is found in the chloroplast thylakoid membrane. In terms of biological role, allophycocyanin is a photosynthetic bile pigment-protein complex with maximum absorption at approximately 650 nanometers. This chain is Allophycocyanin alpha-B chain (apcD), found in Pyropia yezoensis (Susabi-nori).